A 443-amino-acid polypeptide reads, in one-letter code: Methyl-coenzyme M reductase II subunit beta (443 aa).

Residue Y367 coordinates coenzyme M. G369 provides a ligand contact to coenzyme B.

The protein belongs to the methyl-coenzyme M reductase beta subunit family. MCR is a hexamer of two alpha, two beta, and two gamma chains, forming a dimer of heterotrimers. Coenzyme F430 is required as a cofactor.

It carries out the reaction coenzyme B + methyl-coenzyme M = methane + coenzyme M-coenzyme B heterodisulfide. It participates in one-carbon metabolism; methyl-coenzyme M reduction; methane from methyl-coenzyme M: step 1/1. Functionally, component of the methyl-coenzyme M reductase (MCR) I that catalyzes the reductive cleavage of methyl-coenzyme M (CoM-S-CH3 or 2-(methylthio)ethanesulfonate) using coenzyme B (CoB or 7-mercaptoheptanoylthreonine phosphate) as reductant which results in the production of methane and the mixed heterodisulfide of CoB and CoM (CoM-S-S-CoB). This is the final step in methanogenesis. The sequence is that of Methyl-coenzyme M reductase II subunit beta from Methanothermobacter marburgensis (strain ATCC BAA-927 / DSM 2133 / JCM 14651 / NBRC 100331 / OCM 82 / Marburg) (Methanobacterium thermoautotrophicum).